Reading from the N-terminus, the 663-residue chain is Beta-galactosidase YesZ (663 aa).

A substrate-binding site is contributed by arginine 106. Cysteine 110 provides a ligand contact to Zn(2+). Asparagine 144 serves as a coordination point for substrate. Catalysis depends on glutamate 145, which acts as the Proton donor. Zn(2+) is bound by residues cysteine 153, cysteine 155, and cysteine 158. The active-site Nucleophile is glutamate 296. Glutamate 345–histidine 348 is a substrate binding site.

This sequence belongs to the glycosyl hydrolase 42 family. Homotrimer.

The enzyme catalyses Hydrolysis of terminal non-reducing beta-D-galactose residues in beta-D-galactosides.. In terms of biological role, may play a role in the degradation of rhamnogalacturonan derived from plant cell walls. This is Beta-galactosidase YesZ (yesZ) from Bacillus subtilis (strain 168).